A 228-amino-acid polypeptide reads, in one-letter code: Uracil-DNA glycosylase (228 aa).

Asp64 serves as the catalytic Proton acceptor.

Belongs to the uracil-DNA glycosylase (UDG) superfamily. UNG family. As to quaternary structure, monomer.

The protein resides in the cytoplasm. It catalyses the reaction Hydrolyzes single-stranded DNA or mismatched double-stranded DNA and polynucleotides, releasing free uracil.. Excises uracil residues from the DNA which can arise as a result of misincorporation of dUMP residues by DNA polymerase or due to deamination of cytosine. This is Uracil-DNA glycosylase from Escherichia coli O6:H1 (strain CFT073 / ATCC 700928 / UPEC).